Consider the following 357-residue polypeptide: MPFLGQDWRSPGWSWIKTEDGWKRCDPCSHELRSEDSQYTINHSIILNSGEEEIFNNECEYAAKKRKKEHFGNDTAAHSFYREKWIYVHKESTKERHGYCTLGEAFNRLDFSSAIQDIRRFTYVVKLLQLIAKSQLTSLSGVAQKNYFNILDKIVQKVLDDHQNPRLIKGLLQDLSSTLGILVRGVGKSVLVGNINIWICRLETVLSWQQQLQNLQVTKQVNTGLTLSDLPLHMLNNILYRFSDGWDIVTLGQVTPTLYMLSEDRRLWKRLCQYHFAEQQFCRHLILSEKGHIEWKLMYFTLQKYYPTKEQYGDTLHFCRHCSILFWKDSGHPCTAADPDSCFTPVSPEHFIDLFKF.

Residues 1–83 (MPFLGQDWRS…DTAAHSFYRE (83 aa)) form an interaction with beta-actin region. Residues 225-273 (LTLSDLPLHMLNNILYRFSDGWDIVTLGQVTPTLYMLSEDRRLWKRLCQ) form the F-box domain.

Part of a SCF (SKP1-cullin-F-box) protein ligase complex consisting of FBXO25, SKP1, CUL1 and RBX1. Interacts directly with SKP1 and CUL1. Interacts (via C-terminus) with beta-actin (via N-terminus). As to expression, expressed in all tissues tested, except striated muscle (at protein level). Expressed predominantly in the cerebral cortex, the hippocampus and the Purkinje cell layer of the brain. Intestine and kidney show also significant levels.

Its subcellular location is the nucleus. Its pathway is protein modification; protein ubiquitination. In terms of biological role, substrate-recognition component of the SCF (SKP1-CUL1-F-box protein)-type E3 ubiquitin ligase complex. May play a role in accumulation of expanded polyglutamine (polyQ) protein huntingtin (HTT). The chain is F-box only protein 25 (Fbxo25) from Mus musculus (Mouse).